Consider the following 145-residue polypeptide: Large ribosomal subunit protein bL17 (145 aa).

This sequence belongs to the bacterial ribosomal protein bL17 family. As to quaternary structure, part of the 50S ribosomal subunit. Contacts protein L32.

The polypeptide is Large ribosomal subunit protein bL17 (Francisella tularensis subsp. tularensis (strain FSC 198)).